The following is an 84-amino-acid chain: Small ribosomal subunit protein bS16 (84 aa).

The protein belongs to the bacterial ribosomal protein bS16 family.

This is Small ribosomal subunit protein bS16 from Paraburkholderia phytofirmans (strain DSM 17436 / LMG 22146 / PsJN) (Burkholderia phytofirmans).